A 251-amino-acid chain; its full sequence is 1-(5-phosphoribosyl)-5-[(5-phosphoribosylamino)methylideneamino] imidazole-4-carboxamide isomerase (251 aa).

Asp8 (proton acceptor) is an active-site residue. Asp131 serves as the catalytic Proton donor.

Belongs to the HisA/HisF family.

It is found in the cytoplasm. It catalyses the reaction 1-(5-phospho-beta-D-ribosyl)-5-[(5-phospho-beta-D-ribosylamino)methylideneamino]imidazole-4-carboxamide = 5-[(5-phospho-1-deoxy-D-ribulos-1-ylimino)methylamino]-1-(5-phospho-beta-D-ribosyl)imidazole-4-carboxamide. It functions in the pathway amino-acid biosynthesis; L-histidine biosynthesis; L-histidine from 5-phospho-alpha-D-ribose 1-diphosphate: step 4/9. The polypeptide is 1-(5-phosphoribosyl)-5-[(5-phosphoribosylamino)methylideneamino] imidazole-4-carboxamide isomerase (Burkholderia ambifaria (strain MC40-6)).